A 347-amino-acid chain; its full sequence is UDP-rhamnose/UDP-galactose transporter 1 (347 aa).

Helical transmembrane passes span 11-31 (AVSD…IIMA), 43-63 (FGFA…VGMV), 80-100 (LLWF…SLML), 103-123 (VGFY…LEWI), 132-152 (EVKA…VTDV), 159-179 (FICA…IGSL), 195-215 (APIQ…LLSG), 223-243 (MTYG…FCNI), 256-276 (SFQV…WLLF), and 285-305 (IAGM…VDIE).

It belongs to the TPT transporter family. TPT (TC 2.A.7.9) subfamily. As to expression, widely expressed in the whole plant.

It localises to the golgi apparatus membrane. In terms of biological role, nucleotide-sugar transporter that transports UDP-rhamnose or UDP-galactose and UMP in a strict counter-exchange mode. The protein is UDP-rhamnose/UDP-galactose transporter 1 of Arabidopsis thaliana (Mouse-ear cress).